A 292-amino-acid chain; its full sequence is Histamine N-methyltransferase (292 aa).

Residue Glu-28 participates in substrate binding. Residues Gly-60, Glu-89, Gln-94, Ser-120, and Ile-142 each coordinate S-adenosyl-L-methionine. Asn-283 contacts substrate.

Belongs to the class I-like SAM-binding methyltransferase superfamily. HNMT family. In terms of assembly, monomer. Expressed in jejunum, brain &gt; lung, spleen, stomach &gt; liver, kidney.

It is found in the cytoplasm. The catalysed reaction is histamine + S-adenosyl-L-methionine = N(tau)-methylhistamine + S-adenosyl-L-homocysteine + H(+). Inactivates histamine by N-methylation. Plays an important role in degrading histamine and in regulating the airway response to histamine. In Cavia porcellus (Guinea pig), this protein is Histamine N-methyltransferase (HNMT).